Consider the following 392-residue polypeptide: Probable Ni/Fe-hydrogenase 2 b-type cytochrome subunit (392 aa).

At 1 to 11 the chain is on the periplasmic side; sequence MSHDPQPLGGK. Residues 12–32 form a helical membrane-spanning segment; that stretch reads IISKPVMIFGPLIVICMLLIV. Over 33–34 the chain is Cytoplasmic; the sequence is KR. A helical transmembrane segment spans residues 35–55; that stretch reads LVFGLGSVSDLNGGFPWGVWI. Topologically, residues 56–58 are periplasmic; that stretch reads AFD. A helical membrane pass occupies residues 59-79; it reads LLIGTGFACGGWALAWAVYVF. Residues 80 to 90 are Cytoplasmic-facing; sequence NRGQYHPLVRP. The chain crosses the membrane as a helical span at residues 91-111; it reads ALLASLFGYSLGGLSITIDVG. The Periplasmic portion of the chain corresponds to 112-133; the sequence is RYWNLPYFYIPGHFNVNSVLFE. A helical membrane pass occupies residues 134–154; that stretch reads TAVCMTIYIGVMALEFAPALF. Residues 155 to 168 lie on the Cytoplasmic side of the membrane; the sequence is ERLGWKVSLQRLNK. A helical transmembrane segment spans residues 169 to 189; that stretch reads VMFFIIALGALLPTMHQSSMG. Residues 190 to 207 are Periplasmic-facing; sequence SLMISAGYKVHPLWQSYE. The helical transmembrane segment at 208-228 threads the bilayer; that stretch reads MLPLFSLLTAFIMGFSIVIFE. Residues 229 to 249 lie on the Cytoplasmic side of the membrane; sequence GSLVQAGLRGNGPDEKSLFVK. The helical transmembrane segment at 250 to 270 threads the bilayer; that stretch reads LTNTISVLLAIFIVLRFGELI. Residues 271-281 are Periplasmic-facing; sequence YRDKLSLAFAG. Residues 282–302 traverse the membrane as a helical segment; the sequence is DFYSVMFWIEVLLMLFPLVVL. Residues 303–333 lie on the Cytoplasmic side of the membrane; the sequence is RVAKLRNDSRMLFLSALSALLGCATWRLTYS. The chain crosses the membrane as a helical span at residues 334–354; that stretch reads LVAFNPGGGYAYFPTWEELLI. Ser355 is a topological domain (periplasmic). The chain crosses the membrane as a helical span at residues 356-376; sequence IGFVAIEICAYIVLIRLLPIL. Residues 377–392 lie on the Cytoplasmic side of the membrane; sequence PPLKQNDHNRHEASKA.

The protein belongs to the NrfD family.

It localises to the cell inner membrane. Its function is as follows. Probable b-type cytochrome. The sequence is that of Probable Ni/Fe-hydrogenase 2 b-type cytochrome subunit (hybB) from Escherichia coli (strain K12).